We begin with the raw amino-acid sequence, 447 residues long: Asparagine--tRNA ligase (447 aa).

This sequence belongs to the class-II aminoacyl-tRNA synthetase family. Homodimer.

It localises to the cytoplasm. It carries out the reaction tRNA(Asn) + L-asparagine + ATP = L-asparaginyl-tRNA(Asn) + AMP + diphosphate + H(+). The sequence is that of Asparagine--tRNA ligase from Lactococcus lactis subsp. cremoris (strain SK11).